We begin with the raw amino-acid sequence, 780 residues long: Vacuolar protein sorting-associated protein 51 homolog (780 aa).

Position 2 is an N-acetylalanine (alanine 2). Disordered stretches follow at residues 270 to 292 and 615 to 651; these read STLVEDDDSSNDTESNDQHPAKI and QGTFRKHKRTDSNGSNTTTSSRSNTLHNDKMARSNSQ. A compositionally biased stretch (acidic residues) spans 273–284; that stretch reads VEDDDSSNDTES. Over residues 626–639 the composition is skewed to low complexity; sequence SNGSNTTTSSRSNT.

It belongs to the VPS51 family. In terms of assembly, component of the Golgi-associated retrograde protein (GARP) complex, composed by VPS51, VPS52, VPS53 and VPS54. Component of the endosome-associated retrograde protein (EARP) complex, composed of VPS51, VPS52, VPS53 and VPS50. Interacts with VPS52. Expressed in primary and lateral roots, shoots of seedlings and flowers.

Its subcellular location is the golgi apparatus. The protein localises to the trans-Golgi network. It localises to the recycling endosome. It is found in the prevacuolar compartment. Acts as a component of the GARP complex that is involved in retrograde transport from early and late endosomes to the trans-Golgi network (TGN). The GARP complex is required for the maintenance of protein retrieval from endosomes to the TGN, acid hydrolase sorting, lysosome function, endosomal cholesterol traffic and autophagy. VPS51 participates in retrograde transport of acid hydrolase receptors, likely by promoting tethering and SNARE-dependent fusion of endosome-derived carriers to the TGN. Acts as a component of the EARP complex that is involved in endocytic recycling. The EARP complex associates with Rab4-positive endosomes and promotes recycling of internalized transferrin receptor (TFRC) to the plasma membrane. Required for vacuolar targeting and cellular trafficking. Involved in the regulation of vascular tissue patterning, probably by regulating PIN1 expression pattern, thus modulating auxin flux. Important to prevent PIN1 accumulation within margin cells, possibly by targeting PIN1 to the lytic vacuole. Regulates PIN1 and ATHB8 expression pattern in secondary veins. This Arabidopsis thaliana (Mouse-ear cress) protein is Vacuolar protein sorting-associated protein 51 homolog.